The chain runs to 208 residues: Protein-L-isoaspartate O-methyltransferase (208 aa).

Ser59 is an active-site residue.

Belongs to the methyltransferase superfamily. L-isoaspartyl/D-aspartyl protein methyltransferase family.

Its subcellular location is the cytoplasm. It catalyses the reaction [protein]-L-isoaspartate + S-adenosyl-L-methionine = [protein]-L-isoaspartate alpha-methyl ester + S-adenosyl-L-homocysteine. Its function is as follows. Catalyzes the methyl esterification of L-isoaspartyl residues in peptides and proteins that result from spontaneous decomposition of normal L-aspartyl and L-asparaginyl residues. It plays a role in the repair and/or degradation of damaged proteins. The sequence is that of Protein-L-isoaspartate O-methyltransferase from Vibrio atlanticus (strain LGP32) (Vibrio splendidus (strain Mel32)).